The primary structure comprises 165 residues: Transmembrane protein 253 (165 aa).

The next 3 membrane-spanning stretches (helical) occupy residues 31-51, 60-80, and 91-111; these read LVLA…AVSV, MTTA…IVTL, and LAGL…GVLV. A disordered region spans residues 145–165; the sequence is EEVPELETGPTVASTAKRTNQ. A compositionally biased stretch (polar residues) spans 155 to 165; it reads TVASTAKRTNQ.

The protein resides in the membrane. This chain is Transmembrane protein 253 (TMEM253), found in Bos taurus (Bovine).